We begin with the raw amino-acid sequence, 356 residues long: S-adenosylmethionine:tRNA ribosyltransferase-isomerase (356 aa).

It belongs to the QueA family. Monomer.

Its subcellular location is the cytoplasm. The catalysed reaction is 7-aminomethyl-7-carbaguanosine(34) in tRNA + S-adenosyl-L-methionine = epoxyqueuosine(34) in tRNA + adenine + L-methionine + 2 H(+). It participates in tRNA modification; tRNA-queuosine biosynthesis. Transfers and isomerizes the ribose moiety from AdoMet to the 7-aminomethyl group of 7-deazaguanine (preQ1-tRNA) to give epoxyqueuosine (oQ-tRNA). The protein is S-adenosylmethionine:tRNA ribosyltransferase-isomerase of Escherichia coli O6:K15:H31 (strain 536 / UPEC).